The primary structure comprises 339 residues: Casein kinase II subunit alpha' (339 aa).

The Protein kinase domain maps to 50–334 (YEIINKIGRG…AKEAMDHKFF (285 aa)). ATP is bound by residues 56–64 (IGRGKYSEV) and Lys-79. Asp-167 acts as the Proton acceptor in catalysis.

It belongs to the protein kinase superfamily. Ser/Thr protein kinase family. CK2 subfamily. In terms of assembly, tetramer composed of an alpha chain, an alpha', one beta chain and one beta' chain. Interacts with FACT subunits POB3 and SPT16. Interacts with NAP1. Interacts with YTA7.

It carries out the reaction L-seryl-[protein] + ATP = O-phospho-L-seryl-[protein] + ADP + H(+). The catalysed reaction is L-threonyl-[protein] + ATP = O-phospho-L-threonyl-[protein] + ADP + H(+). In terms of biological role, catalytic subunit of a constitutively active serine/threonine-protein kinase complex that phosphorylates a large number of substrates containing acidic residues C-terminal to the phosphorylated serine or threonine. Phosphorylates YTA7 during S-phase to promote transcription of histones. The chain is Casein kinase II subunit alpha' from Saccharomyces cerevisiae (strain ATCC 204508 / S288c) (Baker's yeast).